We begin with the raw amino-acid sequence, 83 residues long: Conotoxin LiCr95 (83 aa).

An N-terminal signal peptide occupies residues Met-1–Thr-22. A propeptide spanning residues Asp-23–Lys-50 is cleaved from the precursor. Disulfide bonds link Cys-52–Cys-67, Cys-59–Cys-71, and Cys-66–Cys-80.

Belongs to the conotoxin O1 superfamily. As to expression, expressed by the venom duct.

Its subcellular location is the secreted. The sequence is that of Conotoxin LiCr95 from Conus lividus (Livid cone).